Reading from the N-terminus, the 479-residue chain is GTPase Obg (479 aa).

An Obg domain is found at 2-159; the sequence is PRFVDRVVIH…RDLTLELKTV (158 aa). The 181-residue stretch at 160–340 folds into the OBG-type G domain; sequence ADVGLVGFPS…LIFGLWQMVS (181 aa). Residues 166 to 173, 191 to 195, 212 to 215, 292 to 295, and 321 to 323 each bind GTP; these read GFPSAGKS, FTTLV, DVPG, NKID, and STV. The Mg(2+) site is built by serine 173 and threonine 193. The OCT domain occupies 358 to 436; it reads PVPVDDSGFD…IGEMTFDWEP (79 aa). The segment at 438–479 is disordered; that stretch reads TPAGGHVAMSGRGTDVRLERSDRVGAAERKAARRQRRERDDD. Residues 451 to 467 show a composition bias toward basic and acidic residues; the sequence is TDVRLERSDRVGAAERK.

It belongs to the TRAFAC class OBG-HflX-like GTPase superfamily. OBG GTPase family. As to quaternary structure, monomer. The cofactor is Mg(2+).

The protein localises to the cytoplasm. An essential GTPase which binds GTP, GDP and possibly (p)ppGpp with moderate affinity, with high nucleotide exchange rates and a fairly low GTP hydrolysis rate. Plays a role in control of the cell cycle, stress response, ribosome biogenesis and in those bacteria that undergo differentiation, in morphogenesis control. The chain is GTPase Obg from Mycobacterium marinum (strain ATCC BAA-535 / M).